Consider the following 432-residue polypeptide: Enolase (432 aa).

Position 167 (Gln-167) interacts with (2R)-2-phosphoglycerate. Residue Glu-209 is the Proton donor of the active site. The Mg(2+) site is built by Asp-246, Glu-291, and Asp-318. Residues Lys-343, Arg-372, Ser-373, and Lys-394 each coordinate (2R)-2-phosphoglycerate. The active-site Proton acceptor is Lys-343.

This sequence belongs to the enolase family. Component of the RNA degradosome, a multiprotein complex involved in RNA processing and mRNA degradation. Mg(2+) serves as cofactor.

The protein localises to the cytoplasm. The protein resides in the secreted. It localises to the cell surface. It carries out the reaction (2R)-2-phosphoglycerate = phosphoenolpyruvate + H2O. Its pathway is carbohydrate degradation; glycolysis; pyruvate from D-glyceraldehyde 3-phosphate: step 4/5. Its function is as follows. Catalyzes the reversible conversion of 2-phosphoglycerate (2-PG) into phosphoenolpyruvate (PEP). It is essential for the degradation of carbohydrates via glycolysis. This is Enolase from Pseudoalteromonas translucida (strain TAC 125).